Here is a 638-residue protein sequence, read N- to C-terminus: 1-deoxy-D-xylulose-5-phosphate synthase (638 aa).

Thiamine diphosphate contacts are provided by residues H81 and 122–124 (GHS). D153 provides a ligand contact to Mg(2+). Thiamine diphosphate contacts are provided by residues 154 to 155 (GS), N182, Y293, and E377. Residue N182 participates in Mg(2+) binding.

It belongs to the transketolase family. DXPS subfamily. Homodimer. Mg(2+) is required as a cofactor. The cofactor is thiamine diphosphate.

It carries out the reaction D-glyceraldehyde 3-phosphate + pyruvate + H(+) = 1-deoxy-D-xylulose 5-phosphate + CO2. The protein operates within metabolic intermediate biosynthesis; 1-deoxy-D-xylulose 5-phosphate biosynthesis; 1-deoxy-D-xylulose 5-phosphate from D-glyceraldehyde 3-phosphate and pyruvate: step 1/1. Catalyzes the acyloin condensation reaction between C atoms 2 and 3 of pyruvate and glyceraldehyde 3-phosphate to yield 1-deoxy-D-xylulose-5-phosphate (DXP). The protein is 1-deoxy-D-xylulose-5-phosphate synthase of Oleidesulfovibrio alaskensis (strain ATCC BAA-1058 / DSM 17464 / G20) (Desulfovibrio alaskensis).